A 195-amino-acid polypeptide reads, in one-letter code: Imidazoleglycerol-phosphate dehydratase (195 aa).

This sequence belongs to the imidazoleglycerol-phosphate dehydratase family.

The protein localises to the cytoplasm. It carries out the reaction D-erythro-1-(imidazol-4-yl)glycerol 3-phosphate = 3-(imidazol-4-yl)-2-oxopropyl phosphate + H2O. It participates in amino-acid biosynthesis; L-histidine biosynthesis; L-histidine from 5-phospho-alpha-D-ribose 1-diphosphate: step 6/9. The protein is Imidazoleglycerol-phosphate dehydratase of Methylorubrum populi (strain ATCC BAA-705 / NCIMB 13946 / BJ001) (Methylobacterium populi).